The sequence spans 327 residues: Malate dehydrogenase (327 aa).

12–18 is a binding site for NAD(+); it reads GAAGQIG. Substrate contacts are provided by Arg93 and Arg99. NAD(+) contacts are provided by residues Asn106, Gln113, and 130 to 132; that span reads VGN. Substrate contacts are provided by Asn132 and Arg163. The active-site Proton acceptor is His188.

The protein belongs to the LDH/MDH superfamily. MDH type 2 family.

The catalysed reaction is (S)-malate + NAD(+) = oxaloacetate + NADH + H(+). Its function is as follows. Catalyzes the reversible oxidation of malate to oxaloacetate. The sequence is that of Malate dehydrogenase from Cupriavidus metallidurans (strain ATCC 43123 / DSM 2839 / NBRC 102507 / CH34) (Ralstonia metallidurans).